The primary structure comprises 1459 residues: Mediator of RNA polymerase II transcription subunit 14 (1459 aa).

The tract at residues 1 to 37 (MAPVQLDNHQLIPPGGGGGSSGGGGSSSGSASAPAPP) is disordered. Residues 14–27 (PGGGGGSSGGGGSS) show a composition bias toward gly residues. Residues 75 to 79 (LTDLL) carry the LXXLL motif 1 motif. The interval 194–572 (KQATLHQLNQ…VPNKPTQLSY (379 aa)) is interaction with STAT2. An interaction with SREBF1 region spans residues 506–830 (LGQQRCKQSI…TKGSSISIQW (325 aa)). S623 and S992 each carry phosphoserine. The interval 979–1171 (ARRRSVNEDD…NMPPPRKLPQ (193 aa)) is disordered. Polar residues-rich tracts occupy residues 1029 to 1059 (PPTS…SSPS) and 1097 to 1106 (DPSSPYTMVS). Residues S1117, S1124, S1133, S1141, and S1149 each carry the phosphoserine modification. Over residues 1152-1161 (AGTSSQTMPT) the composition is skewed to polar residues. Residues 1187-1191 (LNILL) carry the LXXLL motif 2 motif.

This sequence belongs to the Mediator complex subunit 14 family. In terms of assembly, component of the Mediator complex, which is composed of MED1, MED4, MED6, MED7, MED8, MED9, MED10, MED11, MED12, MED13, MED13L, MED14, MED15, MED16, MED17, MED18, MED19, MED20, MED21, MED22, MED23, MED24, MED25, MED26, MED27, MED29, MED30, MED31, CCNC, CDK8 and CDC2L6/CDK11. The MED12, MED13, CCNC and CDK8 subunits form a distinct module termed the CDK8 module. Mediator containing the CDK8 module is less active than Mediator lacking this module in supporting transcriptional activation. Individual preparations of the Mediator complex lacking one or more distinct subunits have been variously termed ARC, CRSP, DRIP, PC2, SMCC and TRAP. Interacts with AR, ESR1, SREBF1 and STAT2. Interacts with GATA1.

It localises to the nucleus. In terms of biological role, component of the Mediator complex, a coactivator involved in the regulated transcription of nearly all RNA polymerase II-dependent genes. Mediator functions as a bridge to convey information from gene-specific regulatory proteins to the basal RNA polymerase II transcription machinery. Mediator is recruited to promoters by direct interactions with regulatory proteins and serves as a scaffold for the assembly of a functional preinitiation complex with RNA polymerase II and the general transcription factors. The chain is Mediator of RNA polymerase II transcription subunit 14 (Med14) from Mus musculus (Mouse).